Consider the following 489-residue polypeptide: Inositol-pentakisphosphate 2-kinase (489 aa).

The EXKPK motif motif lies at 136–140 (EIKPK).

The protein belongs to the IPK1 type 2 family. In brain, it is expressed throughout the hippocampus (CA1, CA2, CA3 and dentate gyrus), inner layers of the cerebral cortex, and Purkinje cells of the cerebellum. In heart, it is expressed in cardiomyocytes but not in interstitial cells, blood vessels, or valves. Also expressed in testis.

The protein localises to the cytoplasm. It is found in the nucleus. It carries out the reaction 1D-myo-inositol 1,3,4,5,6-pentakisphosphate + ATP = 1D-myo-inositol hexakisphosphate + ADP + H(+). Phosphorylates Ins(1,3,4,5,6)P5 at position 2 to form Ins(1,2,3,4,5,6)P6 (InsP6 or phytate). InsP6 is involved in many processes such as mRNA export, non-homologous end-joining, endocytosis, ion channel regulation. It also protects cells from TNF-alpha-induced apoptosis. The protein is Inositol-pentakisphosphate 2-kinase (Ippk) of Mus musculus (Mouse).